The chain runs to 98 residues: Integration host factor subunit alpha (98 aa).

Residues 52-73 (FDLREKNQRPGRNPKTGEDIPI) form a disordered region.

This sequence belongs to the bacterial histone-like protein family. As to quaternary structure, heterodimer of an alpha and a beta chain.

Its function is as follows. This protein is one of the two subunits of integration host factor, a specific DNA-binding protein that functions in genetic recombination as well as in transcriptional and translational control. In Aeromonas hydrophila subsp. hydrophila (strain ATCC 7966 / DSM 30187 / BCRC 13018 / CCUG 14551 / JCM 1027 / KCTC 2358 / NCIMB 9240 / NCTC 8049), this protein is Integration host factor subunit alpha.